We begin with the raw amino-acid sequence, 132 residues long: Large ribosomal subunit protein uL14 (132 aa).

It belongs to the universal ribosomal protein uL14 family. In terms of assembly, part of the 50S ribosomal subunit. Forms a cluster with proteins L3 and L24e, part of which may contact the 16S rRNA in 2 intersubunit bridges.

Binds to 23S rRNA. Forms part of two intersubunit bridges in the 70S ribosome. This chain is Large ribosomal subunit protein uL14, found in Archaeoglobus fulgidus (strain ATCC 49558 / DSM 4304 / JCM 9628 / NBRC 100126 / VC-16).